A 215-amino-acid chain; its full sequence is uncharacterized protein (215 aa).

6 consecutive transmembrane segments (helical) span residues 21 to 40 (IIKY…VLIN), 50 to 69 (LIFS…TIIF), 95 to 117 (FVAI…YVFF), 122 to 144 (LEIA…LVVL), 157 to 179 (NFVG…LILQ), and 185 to 207 (LIFI…SAYL).

It belongs to the CcmB/CycW/HelB family.

It is found in the cell membrane. This is an uncharacterized protein from Rickettsia prowazekii (strain Madrid E).